A 100-amino-acid chain; its full sequence is Ubiquitin-related modifier 1 (100 aa).

1-thioglycine is present on glycine 100. Glycine 100 participates in a covalent cross-link: Glycyl lysine isopeptide (Gly-Lys) (interchain with K-? in acceptor proteins).

Belongs to the URM1 family. C-terminal thiocarboxylation occurs in 2 steps, it is first acyl-adenylated (-COAMP) via the hesA/moeB/thiF part of UBA4, then thiocarboxylated (-COSH) via the rhodanese domain of UBA4.

It is found in the cytoplasm. It participates in tRNA modification; 5-methoxycarbonylmethyl-2-thiouridine-tRNA biosynthesis. Acts as a sulfur carrier required for 2-thiolation of mcm(5)S(2)U at tRNA wobble positions of cytosolic tRNA(Lys), tRNA(Glu) and tRNA(Gln). Serves as sulfur donor in tRNA 2-thiolation reaction by being thiocarboxylated (-COSH) at its C-terminus by the MOCS3 homolog UBA4. The sulfur is then transferred to tRNA to form 2-thiolation of mcm(5)S(2)U. Prior mcm(5) tRNA modification by the elongator complex is required for 2-thiolation. Also acts as a ubiquitin-like protein (UBL) that is covalently conjugated via an isopeptide bond to lysine residues of target proteins such as AHP1. The thiocarboxylated form serves as substrate for conjugation and oxidative stress specifically induces the formation of UBL-protein conjugates. This is Ubiquitin-related modifier 1 from Eremothecium gossypii (strain ATCC 10895 / CBS 109.51 / FGSC 9923 / NRRL Y-1056) (Yeast).